Consider the following 343-residue polypeptide: Heat-inducible transcription repressor HrcA (343 aa).

Belongs to the HrcA family.

Negative regulator of class I heat shock genes (grpE-dnaK-dnaJ and groELS operons). Prevents heat-shock induction of these operons. The polypeptide is Heat-inducible transcription repressor HrcA (Leptospira biflexa serovar Patoc (strain Patoc 1 / Ames)).